We begin with the raw amino-acid sequence, 1002 residues long: DNA-directed RNA polymerase 1B, mitochondrial (1002 aa).

A mitochondrion-targeting transit peptide spans 1–21; it reads MWRYISKHAYSRKFRNSHDSA. Residues aspartate 703, lysine 778, and aspartate 935 contribute to the active site.

It belongs to the phage and mitochondrial RNA polymerase family.

Its subcellular location is the mitochondrion. It carries out the reaction RNA(n) + a ribonucleoside 5'-triphosphate = RNA(n+1) + diphosphate. Functionally, DNA-dependent RNA polymerase catalyzes the transcription of DNA into RNA using the four ribonucleoside triphosphates as substrates. This chain is DNA-directed RNA polymerase 1B, mitochondrial (RPOT1-TOM), found in Nicotiana tabacum (Common tobacco).